The sequence spans 268 residues: Glutamate racemase (268 aa).

Substrate contacts are provided by residues 9-10 (DS) and 41-42 (YG). Cys73 (proton donor/acceptor) is an active-site residue. Residue 74–75 (NS) coordinates substrate. The active-site Proton donor/acceptor is Cys183. A substrate-binding site is contributed by 184–185 (TH).

The protein belongs to the aspartate/glutamate racemases family.

It catalyses the reaction L-glutamate = D-glutamate. Its pathway is cell wall biogenesis; peptidoglycan biosynthesis. Its function is as follows. Provides the (R)-glutamate required for cell wall biosynthesis. This is Glutamate racemase from Shewanella pealeana (strain ATCC 700345 / ANG-SQ1).